The chain runs to 790 residues: LPS-assembly protein LptD (790 aa).

Residues 1–20 form the signal peptide; the sequence is MRMLRWLILSAFSVAGAVQA.

This sequence belongs to the LptD family. As to quaternary structure, component of the lipopolysaccharide transport and assembly complex. Interacts with LptE and LptA.

The protein resides in the cell outer membrane. Its function is as follows. Together with LptE, is involved in the assembly of lipopolysaccharide (LPS) at the surface of the outer membrane. The protein is LPS-assembly protein LptD of Bordetella pertussis (strain Tohama I / ATCC BAA-589 / NCTC 13251).